The sequence spans 845 residues: ATPase morc-1 (845 aa).

Residues Asn43, 88–90 (SAK), and 97–103 (RYGNGLK) each bind ATP. Mg(2+) is bound at residue Asn43. A coiled-coil region spans residues 284 to 311 (AAYNKILDEKNETVKKCEEEKALVMSEI). Residue Lys422 coordinates ATP. 2 disordered regions span residues 566-590 (LPQK…SASS) and 628-739 (KMEP…GKAV). Positions 574–590 (SAPSSSDSQNSIRSASS) are enriched in low complexity. Residues 637–646 (HDSHIAEVQR) show a composition bias toward basic and acidic residues.

Predominantly forms monomers and dimers, but multimerizes to form trimers and tetramers upon DNA binding. In terms of tissue distribution, expressed in germline and somatic cells.

The protein resides in the nucleus. It is found in the nuclear body. The catalysed reaction is ATP + H2O = ADP + phosphate + H(+). Functionally, binds non-specifically to DNA and forms static foci which grow by recruiting other morc-1 molecules, and thereby stimulates conformational changes and compaction of DNA, which appears to be enhanced by ATP-binding, but does not require ATP activity. Preferentially binds to long DNAs. Compacts and entraps segments of DNA by sequentially forming loops along the DNA, beginning at the free ends of single- and double-tethered DNA. Does not extrude the DNA loops on compacted double-tethered DNA. Involved in gene silencing. Plays a role in germline RNA interference (RNAi), and in particular, the silencing of endogenous small interfering RNA (endo-siRNA) target genes. May play a role in heterochromatin localization and condensation, and the siRNAi-directed trimethylation of 'Lys-9' of histone H3 in hermaphrodite X chromosomes. Promotes transgenerational epigenetic inheritance and germline immortality. The sequence is that of ATPase morc-1 from Caenorhabditis elegans.